Consider the following 353-residue polypeptide: Nicotinate-nucleotide--dimethylbenzimidazole phosphoribosyltransferase (353 aa).

Catalysis depends on glutamate 319, which acts as the Proton acceptor.

It belongs to the CobT family.

It catalyses the reaction 5,6-dimethylbenzimidazole + nicotinate beta-D-ribonucleotide = alpha-ribazole 5'-phosphate + nicotinate + H(+). It participates in nucleoside biosynthesis; alpha-ribazole biosynthesis; alpha-ribazole from 5,6-dimethylbenzimidazole: step 1/2. Its function is as follows. Catalyzes the synthesis of alpha-ribazole-5'-phosphate from nicotinate mononucleotide (NAMN) and 5,6-dimethylbenzimidazole (DMB). This Chlorobaculum tepidum (strain ATCC 49652 / DSM 12025 / NBRC 103806 / TLS) (Chlorobium tepidum) protein is Nicotinate-nucleotide--dimethylbenzimidazole phosphoribosyltransferase.